We begin with the raw amino-acid sequence, 40 residues long: Photosystem II reaction center protein J (40 aa).

Residues 8 to 28 (IPLWLIGTVTGIAVIGLIGVF) traverse the membrane as a helical segment.

It belongs to the PsbJ family. In terms of assembly, PSII is composed of 1 copy each of membrane proteins PsbA, PsbB, PsbC, PsbD, PsbE, PsbF, PsbH, PsbI, PsbJ, PsbK, PsbL, PsbM, PsbT, PsbX, PsbY, PsbZ, Psb30/Ycf12, at least 3 peripheral proteins of the oxygen-evolving complex and a large number of cofactors. It forms dimeric complexes.

Its subcellular location is the plastid. The protein localises to the chloroplast thylakoid membrane. In terms of biological role, one of the components of the core complex of photosystem II (PSII). PSII is a light-driven water:plastoquinone oxidoreductase that uses light energy to abstract electrons from H(2)O, generating O(2) and a proton gradient subsequently used for ATP formation. It consists of a core antenna complex that captures photons, and an electron transfer chain that converts photonic excitation into a charge separation. The polypeptide is Photosystem II reaction center protein J (Oryza nivara (Indian wild rice)).